The following is a 312-amino-acid chain: Malate dehydrogenase (312 aa).

NAD(+) is bound by residues 7 to 12 (GAGNVG) and aspartate 32. Substrate is bound by residues arginine 82 and arginine 88. NAD(+)-binding positions include asparagine 95 and 118 to 120 (VSN). The substrate site is built by asparagine 120 and arginine 151. Histidine 175 functions as the Proton acceptor in the catalytic mechanism.

The protein belongs to the LDH/MDH superfamily. MDH type 3 family.

It catalyses the reaction (S)-malate + NAD(+) = oxaloacetate + NADH + H(+). In terms of biological role, catalyzes the reversible oxidation of malate to oxaloacetate. The chain is Malate dehydrogenase from Cytophaga hutchinsonii (strain ATCC 33406 / DSM 1761 / CIP 103989 / NBRC 15051 / NCIMB 9469 / D465).